The chain runs to 301 residues: NAD kinase (301 aa).

Catalysis depends on Asp-81, which acts as the Proton acceptor. NAD(+)-binding positions include 81–82, 155–156, His-166, Arg-183, Asp-185, 196–201, and Gln-256; these read DG, NE, and TAYSLS.

This sequence belongs to the NAD kinase family. A divalent metal cation serves as cofactor.

It localises to the cytoplasm. The catalysed reaction is NAD(+) + ATP = ADP + NADP(+) + H(+). Involved in the regulation of the intracellular balance of NAD and NADP, and is a key enzyme in the biosynthesis of NADP. Catalyzes specifically the phosphorylation on 2'-hydroxyl of the adenosine moiety of NAD to yield NADP. This chain is NAD kinase, found in Mannheimia succiniciproducens (strain KCTC 0769BP / MBEL55E).